The chain runs to 461 residues: Cysteine--tRNA ligase (461 aa).

Cys-28 is a Zn(2+) binding site. Positions 30 to 40 (ITIYDLCHIGH) match the 'HIGH' region motif. Residues Cys-209, His-234, and Glu-238 each contribute to the Zn(2+) site. Positions 266–270 (KMSKS) match the 'KMSKS' region motif. An ATP-binding site is contributed by Lys-269.

The protein belongs to the class-I aminoacyl-tRNA synthetase family. Monomer. Requires Zn(2+) as cofactor.

The protein localises to the cytoplasm. The enzyme catalyses tRNA(Cys) + L-cysteine + ATP = L-cysteinyl-tRNA(Cys) + AMP + diphosphate. This chain is Cysteine--tRNA ligase, found in Yersinia pestis bv. Antiqua (strain Antiqua).